The primary structure comprises 301 residues: GTPase Era (301 aa).

The Era-type G domain occupies 4–173; sequence KAGFVALIGK…LECISEHLSP (170 aa). A G1 region spans residues 12–19; sequence GKPNAGKS. 12 to 19 provides a ligand contact to GTP; that stretch reads GKPNAGKS. The segment at 38–42 is G2; that stretch reads NATRK. The tract at residues 64-67 is G3; that stretch reads DTPG. GTP is bound by residues 64–68 and 122–125; these read DTPGL and SKID. The interval 122 to 125 is G4; that stretch reads SKID. The G5 stretch occupies residues 152-154; it reads LSA. The KH type-2 domain maps to 204–280; that stretch reads LSDEIPYESD…FLNLQVIAQK (77 aa).

The protein belongs to the TRAFAC class TrmE-Era-EngA-EngB-Septin-like GTPase superfamily. Era GTPase family. As to quaternary structure, monomer.

It localises to the cytoplasm. The protein localises to the cell inner membrane. An essential GTPase that binds both GDP and GTP, with rapid nucleotide exchange. Plays a role in 16S rRNA processing and 30S ribosomal subunit biogenesis and possibly also in cell cycle regulation and energy metabolism. The protein is GTPase Era of Helicobacter acinonychis (strain Sheeba).